We begin with the raw amino-acid sequence, 613 residues long: Protein CER1-like 2 (613 aa).

6 helical membrane-spanning segments follow: residues 13-33 (WTPLGSFKYLLLAPLVFDSIY), 44-64 (LLIVAVTVWRIVHSQIWISLS), 95-115 (IIFNTLIVYLTKVYVSGTSTI), 122-142 (GVILVALLHAGPVEFIYYWFH), 182-202 (LILGLPLITTFMCGTVSVVSI), and 322-342 (YLFLMKPFALILSFILRSFSF). The Fatty acid hydroxylase domain occupies 134-268 (VEFIYYWFHR…MPMYDYIYGT (135 aa)).

Belongs to the sterol desaturase family. As to expression, not detected in any tissues.

The protein localises to the membrane. The chain is Protein CER1-like 2 from Arabidopsis thaliana (Mouse-ear cress).